The following is a 372-amino-acid chain: NAD(P)H-quinone oxidoreductase subunit 1 (372 aa).

8 helical membrane passes run 28–48 (IWLPLPLLLMIIGATVGVLVV), 97–117 (WLFTLGPALVVIPVFLSYLIV), 130–150 (VGIFLWISLSSIAPIGLLMSG), 176–196 (LALAVLAIAMMSNSLSTIDIV), 204–224 (ILGWNIWRQPVGFLIFWIAAL), 265–285 (LVLSALIVSILYLGGWEFPIP), 308–328 (SLGIIMTLVKTYALVFIAVLL), and 351–371 (VALVNLLLTAALKLAFPIAFG).

The protein belongs to the complex I subunit 1 family. As to quaternary structure, NDH-1 is composed of at least 11 different subunits.

It is found in the cellular thylakoid membrane. The catalysed reaction is a plastoquinone + NADH + (n+1) H(+)(in) = a plastoquinol + NAD(+) + n H(+)(out). The enzyme catalyses a plastoquinone + NADPH + (n+1) H(+)(in) = a plastoquinol + NADP(+) + n H(+)(out). Functionally, NDH-1 shuttles electrons from an unknown electron donor, via FMN and iron-sulfur (Fe-S) centers, to quinones in the respiratory and/or the photosynthetic chain. The immediate electron acceptor for the enzyme in this species is believed to be plastoquinone. Couples the redox reaction to proton translocation, and thus conserves the redox energy in a proton gradient. The protein is NAD(P)H-quinone oxidoreductase subunit 1 of Picosynechococcus sp. (strain ATCC 27264 / PCC 7002 / PR-6) (Agmenellum quadruplicatum).